The following is a 506-amino-acid chain: ATP synthase subunit alpha, mitochondrial (506 aa).

171–178 lines the ATP pocket; that stretch reads GDRQTGKT.

It belongs to the ATPase alpha/beta chains family. As to quaternary structure, F-type ATPases have 2 components, CF(1) - the catalytic core - and CF(0) - the membrane proton channel. CF(1) has five subunits: alpha(3), beta(3), gamma(1), delta(1), epsilon(1). CF(0) has three main subunits: a, b and c.

The protein resides in the mitochondrion. Its subcellular location is the mitochondrion inner membrane. Functionally, mitochondrial membrane ATP synthase (F(1)F(0) ATP synthase or Complex V) produces ATP from ADP in the presence of a proton gradient across the membrane which is generated by electron transport complexes of the respiratory chain. F-type ATPases consist of two structural domains, F(1) - containing the extramembraneous catalytic core, and F(0) - containing the membrane proton channel, linked together by a central stalk and a peripheral stalk. During catalysis, ATP synthesis in the catalytic domain of F(1) is coupled via a rotary mechanism of the central stalk subunits to proton translocation. Subunits alpha and beta form the catalytic core in F(1). Rotation of the central stalk against the surrounding alpha(3)beta(3) subunits leads to hydrolysis of ATP in three separate catalytic sites on the beta subunits. Subunit alpha does not bear the catalytic high-affinity ATP-binding sites. This is ATP synthase subunit alpha, mitochondrial (ATPA) from Beta vulgaris (Sugar beet).